Here is a 231-residue protein sequence, read N- to C-terminus: Ribose-5-phosphate isomerase A (231 aa).

Substrate-binding positions include 28 to 31 (TGST), 83 to 86 (DGAD), and 96 to 99 (KGGG). The active-site Proton acceptor is the Glu-105. Lys-123 provides a ligand contact to substrate.

The protein belongs to the ribose 5-phosphate isomerase family. As to quaternary structure, homodimer.

It catalyses the reaction aldehydo-D-ribose 5-phosphate = D-ribulose 5-phosphate. It functions in the pathway carbohydrate degradation; pentose phosphate pathway; D-ribose 5-phosphate from D-ribulose 5-phosphate (non-oxidative stage): step 1/1. Catalyzes the reversible conversion of ribose-5-phosphate to ribulose 5-phosphate. The protein is Ribose-5-phosphate isomerase A of Rhizobium meliloti (strain 1021) (Ensifer meliloti).